We begin with the raw amino-acid sequence, 171 residues long: MMLVLTTLIFSFSASIAYAQSGCSVSDPLDALKAFKDGAGTFLLQKSTDPQARDCLKGTPNGNRDGNTLPVTMTYKDDSKWVSLNWMFTLEGANIVATLEGKRKQRGELVYDVQSHDCHITKLSSGVYQQWQSNGSADDKDIKCCDEKFKELTSGIDYTKPQEKGCETSAK.

Residues 1–15 (MMLVLTTLIFSFSAS) form the signal peptide. 3 cysteine pairs are disulfide-bonded: C23–C144, C55–C166, and C118–C145.

It belongs to the calycin superfamily. Lipocalin family. Post-translationally, the N-terminus is blocked. As to expression, expressed in salivary glands.

It localises to the secreted. Its function is as follows. Tick salivary platelet aggregation inhibitor that plays an important part in the anti-hemostatic strategy of ticks. Acts by scavenging thromboxane A2 (TXA2), a potent inducer of platelet aggregation and blood vessel constriction. As a consequence, is a specific inhibitor of collagen-induced platelet aggregation. In addition, it also acts as a potent inhibitor of TXA2-mediated vasoconstriction. Has also been found to bind leukotriene B4 (LTB4) (which also derives from arachidonic acid, as TXA2) with affinities in the nanomolar range. It does not interact with complement protein C5. In Ornithodoros moubata (Soft tick), this protein is Moubatin.